The chain runs to 252 residues: 2-succinyl-6-hydroxy-2,4-cyclohexadiene-1-carboxylate synthase (252 aa).

It belongs to the AB hydrolase superfamily. MenH family. As to quaternary structure, monomer.

The catalysed reaction is 5-enolpyruvoyl-6-hydroxy-2-succinyl-cyclohex-3-ene-1-carboxylate = (1R,6R)-6-hydroxy-2-succinyl-cyclohexa-2,4-diene-1-carboxylate + pyruvate. It participates in quinol/quinone metabolism; 1,4-dihydroxy-2-naphthoate biosynthesis; 1,4-dihydroxy-2-naphthoate from chorismate: step 3/7. Its pathway is quinol/quinone metabolism; menaquinone biosynthesis. In terms of biological role, catalyzes a proton abstraction reaction that results in 2,5-elimination of pyruvate from 2-succinyl-5-enolpyruvyl-6-hydroxy-3-cyclohexene-1-carboxylate (SEPHCHC) and the formation of 2-succinyl-6-hydroxy-2,4-cyclohexadiene-1-carboxylate (SHCHC). In Escherichia coli (strain K12 / MC4100 / BW2952), this protein is 2-succinyl-6-hydroxy-2,4-cyclohexadiene-1-carboxylate synthase.